Reading from the N-terminus, the 738-residue chain is Adhesion G protein-coupled receptor L4 (738 aa).

An N-terminal signal peptide occupies residues 1 to 19 (MRLLLLLVGLSTLLNHSYT). An EGF-like 1 domain is found at 20–56 (QNCKTPCLPNAKCEVLDEVAACFCSTGYTGNGITICE). Residues 20–480 (QNCKTPCLPN…DYNILTRITQ (461 aa)) are Extracellular-facing. Disulfide bonds link cysteine 22-cysteine 32, cysteine 26-cysteine 41, cysteine 43-cysteine 55, cysteine 61-cysteine 73, cysteine 67-cysteine 82, cysteine 84-cysteine 105, cysteine 111-cysteine 123, cysteine 117-cysteine 132, and cysteine 134-cysteine 155. One can recognise an EGF-like 2; calcium-binding domain in the interval 57–106 (DVDECNETSVCGDHAVCENTNGGFSCFCVEGYQTSTGKTQFTPNDGSYCQ). N-linked (GlcNAc...) asparagine glycosylation occurs at asparagine 62. The 50-residue stretch at 107–156 (DVDECNETSVCGDHAVCENTNGGFSCFCVEGYQTSTGKTQFTPNDGSYCQ) folds into the EGF-like 3; calcium-binding domain. Asparagine 112 carries N-linked (GlcNAc...) asparagine glycosylation. Residues asparagine 175, asparagine 226, asparagine 297, asparagine 421, asparagine 429, and asparagine 443 are each glycosylated (N-linked (GlcNAc...) asparagine). Residues 292–467 (TQFDMNSTDL…AILMSPSTSI (176 aa)) enclose the GAIN-B domain. 2 disulfide bridges follow: cysteine 417–cysteine 449 and cysteine 437–cysteine 451. Residues 417-467 (CAFWNYSVDDMNNGSWSSEGCELTYSNDTHTSCRCSHLTHFAILMSPSTSI) are GPS. A helical transmembrane segment spans residues 481–501 (LGIIISLICLAICIFTFWFFS). Residues 502 to 522 (EIQSTRTTIHKNLCCSLFLAQ) are Cytoplasmic-facing. The chain crosses the membrane as a helical span at residues 523–543 (LVFLVGININTNKLVCSIIAG). Residues 544–547 (LLHY) lie on the Extracellular side of the membrane. Residues 548–568 (FFLAAFAWMCIEGIYLYLIVV) form a helical membrane-spanning segment. Residues 569–580 (GLIYNKGFLHKN) lie on the Cytoplasmic side of the membrane. Residues 581–601 (FYIFGYLSPAVVVGFSASLGY) form a helical membrane-spanning segment. Topologically, residues 602–621 (RYYGTTKVCWLSTENNFIWS) are extracellular. The chain crosses the membrane as a helical span at residues 622 to 642 (FIGPACLIILVNLLAFGVIIY). Residues 643–666 (KVFRHTAGLKPEVSCYENIRSCAR) lie on the Cytoplasmic side of the membrane. The helical transmembrane segment at 667 to 687 (GALALLFLLGTTWTFGVLHVV) threads the bilayer. The Extracellular segment spans residues 688-694 (HASVVTA). Residues 695–715 (YLFTVSNAFQGMFIFLFLCVL) traverse the membrane as a helical segment. At 716-738 (SRKIQEEYYRLFKNVPCCFECLR) the chain is on the cytoplasmic side.

The protein belongs to the G-protein coupled receptor 2 family. Adhesion G-protein coupled receptor (ADGR) subfamily. As to quaternary structure, heterodimer of 2 chains generated by proteolytic processing; the large extracellular N-terminal fragment and the membrane-bound C-terminal fragment predominantly remain associated and non-covalently linked. Post-translationally, proteolytically cleaved into 2 subunits, an extracellular alpha subunit and a seven-transmembrane subunit. In terms of processing, glycosylated. As to expression, abundantly expressed in heart, lung, and kidney. Less evident expression is observed in brain, skeletal muscle, liver and spleen. No expression is detected in testis.

The protein resides in the cell membrane. Its function is as follows. Endothelial orphan receptor that acts as a key regulator of angiogenesis. This is Adhesion G protein-coupled receptor L4 (Adgrl4) from Rattus norvegicus (Rat).